A 203-amino-acid polypeptide reads, in one-letter code: Holliday junction branch migration complex subunit RuvA (203 aa).

The domain I stretch occupies residues 1–63 (MIAFVSGPVA…EDSLTLYGFV (63 aa)). The domain II stretch occupies residues 64-141 (DDDERQVFEL…GEPLGTGGPA (78 aa)). Residues 141-145 (AIGRA) are flexible linker. The segment at 146–203 (VTTGWREQLHAALIGLGYATREADEAVAAVAPQAEAAGGTPQVGQLLKAALQTLNRTR) is domain III.

Belongs to the RuvA family. As to quaternary structure, homotetramer. Forms an RuvA(8)-RuvB(12)-Holliday junction (HJ) complex. HJ DNA is sandwiched between 2 RuvA tetramers; dsDNA enters through RuvA and exits via RuvB. An RuvB hexamer assembles on each DNA strand where it exits the tetramer. Each RuvB hexamer is contacted by two RuvA subunits (via domain III) on 2 adjacent RuvB subunits; this complex drives branch migration. In the full resolvosome a probable DNA-RuvA(4)-RuvB(12)-RuvC(2) complex forms which resolves the HJ.

Its subcellular location is the cytoplasm. Functionally, the RuvA-RuvB-RuvC complex processes Holliday junction (HJ) DNA during genetic recombination and DNA repair, while the RuvA-RuvB complex plays an important role in the rescue of blocked DNA replication forks via replication fork reversal (RFR). RuvA specifically binds to HJ cruciform DNA, conferring on it an open structure. The RuvB hexamer acts as an ATP-dependent pump, pulling dsDNA into and through the RuvAB complex. HJ branch migration allows RuvC to scan DNA until it finds its consensus sequence, where it cleaves and resolves the cruciform DNA. The polypeptide is Holliday junction branch migration complex subunit RuvA (Streptomyces avermitilis (strain ATCC 31267 / DSM 46492 / JCM 5070 / NBRC 14893 / NCIMB 12804 / NRRL 8165 / MA-4680)).